Here is a 294-residue protein sequence, read N- to C-terminus: 2-dehydropantoate 2-reductase (294 aa).

NADP(+) contacts are provided by residues 10-15 (GAGALG), Arg34, Lys74, Asn98, and Ala122. Catalysis depends on Lys178, which acts as the Proton donor. Substrate-binding positions include Lys178, Asn182, Asn186, Asn196, and 243–246 (NRSS). Glu258 is a binding site for NADP(+).

The protein belongs to the ketopantoate reductase family.

Its subcellular location is the cytoplasm. The catalysed reaction is (R)-pantoate + NAD(+) = 2-dehydropantoate + NADH + H(+). It carries out the reaction (R)-pantoate + NADP(+) = 2-dehydropantoate + NADPH + H(+). The protein operates within cofactor biosynthesis; coenzyme A biosynthesis. In terms of biological role, catalyzes the NAD(P)H-dependent reduction of ketopantoate into pantoic acid. The chain is 2-dehydropantoate 2-reductase from Archaeoglobus fulgidus (strain ATCC 49558 / DSM 4304 / JCM 9628 / NBRC 100126 / VC-16).